A 467-amino-acid chain; its full sequence is Glutamate--tRNA ligase (467 aa).

A 'HIGH' region motif is present at residues 10-20 (PSPTGYLHVGG). The Zn(2+) site is built by C99, C101, C126, and E128. Residues 237–241 (RLSKR) carry the 'KMSKS' region motif. Residue K240 coordinates ATP.

It belongs to the class-I aminoacyl-tRNA synthetase family. Glutamate--tRNA ligase type 1 subfamily. As to quaternary structure, monomer. The cofactor is Zn(2+).

It is found in the cytoplasm. It catalyses the reaction tRNA(Glu) + L-glutamate + ATP = L-glutamyl-tRNA(Glu) + AMP + diphosphate. Its function is as follows. Catalyzes the attachment of glutamate to tRNA(Glu) in a two-step reaction: glutamate is first activated by ATP to form Glu-AMP and then transferred to the acceptor end of tRNA(Glu). This is Glutamate--tRNA ligase from Geotalea uraniireducens (strain Rf4) (Geobacter uraniireducens).